Consider the following 245-residue polypeptide: 4-hydroxy-tetrahydrodipicolinate reductase (245 aa).

Residues 7–12 (GAKGKV), 75–77 (GTT), and 102–105 (APNF) each bind NAD(+). The active-site Proton donor/acceptor is the H132. H133 provides a ligand contact to (S)-2,3,4,5-tetrahydrodipicolinate. K136 (proton donor) is an active-site residue. Residue 142–143 (GT) participates in (S)-2,3,4,5-tetrahydrodipicolinate binding.

The protein belongs to the DapB family.

The protein localises to the cytoplasm. The enzyme catalyses (S)-2,3,4,5-tetrahydrodipicolinate + NAD(+) + H2O = (2S,4S)-4-hydroxy-2,3,4,5-tetrahydrodipicolinate + NADH + H(+). It catalyses the reaction (S)-2,3,4,5-tetrahydrodipicolinate + NADP(+) + H2O = (2S,4S)-4-hydroxy-2,3,4,5-tetrahydrodipicolinate + NADPH + H(+). The protein operates within amino-acid biosynthesis; L-lysine biosynthesis via DAP pathway; (S)-tetrahydrodipicolinate from L-aspartate: step 4/4. In terms of biological role, catalyzes the conversion of 4-hydroxy-tetrahydrodipicolinate (HTPA) to tetrahydrodipicolinate. The sequence is that of 4-hydroxy-tetrahydrodipicolinate reductase from Mycobacterium sp. (strain KMS).